The following is a 324-amino-acid chain: Methionyl-tRNA formyltransferase (324 aa).

114-117 (SLLP) is a (6S)-5,6,7,8-tetrahydrofolate binding site.

This sequence belongs to the Fmt family.

It catalyses the reaction L-methionyl-tRNA(fMet) + (6R)-10-formyltetrahydrofolate = N-formyl-L-methionyl-tRNA(fMet) + (6S)-5,6,7,8-tetrahydrofolate + H(+). In terms of biological role, attaches a formyl group to the free amino group of methionyl-tRNA(fMet). The formyl group appears to play a dual role in the initiator identity of N-formylmethionyl-tRNA by promoting its recognition by IF2 and preventing the misappropriation of this tRNA by the elongation apparatus. This chain is Methionyl-tRNA formyltransferase, found in Azobacteroides pseudotrichonymphae genomovar. CFP2.